The following is a 222-amino-acid chain: Phosphoribosylformylglycinamidine synthase subunit PurQ (222 aa).

A Glutamine amidotransferase type-1 domain is found at 2 to 222; sequence SVAIVRFPGT…DNLLHIAEMK (221 aa). Cysteine 86 functions as the Nucleophile in the catalytic mechanism. Residues histidine 194 and glutamate 196 contribute to the active site.

As to quaternary structure, part of the FGAM synthase complex composed of 1 PurL, 1 PurQ and 2 PurS subunits.

It is found in the cytoplasm. The enzyme catalyses N(2)-formyl-N(1)-(5-phospho-beta-D-ribosyl)glycinamide + L-glutamine + ATP + H2O = 2-formamido-N(1)-(5-O-phospho-beta-D-ribosyl)acetamidine + L-glutamate + ADP + phosphate + H(+). It carries out the reaction L-glutamine + H2O = L-glutamate + NH4(+). The protein operates within purine metabolism; IMP biosynthesis via de novo pathway; 5-amino-1-(5-phospho-D-ribosyl)imidazole from N(2)-formyl-N(1)-(5-phospho-D-ribosyl)glycinamide: step 1/2. Part of the phosphoribosylformylglycinamidine synthase complex involved in the purines biosynthetic pathway. Catalyzes the ATP-dependent conversion of formylglycinamide ribonucleotide (FGAR) and glutamine to yield formylglycinamidine ribonucleotide (FGAM) and glutamate. The FGAM synthase complex is composed of three subunits. PurQ produces an ammonia molecule by converting glutamine to glutamate. PurL transfers the ammonia molecule to FGAR to form FGAM in an ATP-dependent manner. PurS interacts with PurQ and PurL and is thought to assist in the transfer of the ammonia molecule from PurQ to PurL. This is Phosphoribosylformylglycinamidine synthase subunit PurQ from Helicobacter hepaticus (strain ATCC 51449 / 3B1).